The chain runs to 137 residues: Small ribosomal subunit protein uS9 (137 aa).

Positions 105 to 117 (LKVEGYLTRDPRA) are enriched in basic and acidic residues. A disordered region spans residues 105 to 137 (LKVEGYLTRDPRAKERKKYGLRKARKAPQYSKR). A compositionally biased stretch (basic residues) spans 118–137 (KERKKYGLRKARKAPQYSKR).

Belongs to the universal ribosomal protein uS9 family.

This Cyanothece sp. (strain PCC 7425 / ATCC 29141) protein is Small ribosomal subunit protein uS9.